The sequence spans 215 residues: Outer-membrane lipoprotein LolB (215 aa).

Positions 1–21 (MLIPKKYYLLIILLSNCLLAS) are cleaved as a signal peptide. The N-palmitoyl cysteine moiety is linked to residue Cys22. Cys22 carries S-diacylglycerol cysteine lipidation.

The protein belongs to the LolB family. Monomer.

Its subcellular location is the cell outer membrane. In terms of biological role, plays a critical role in the incorporation of lipoproteins in the outer membrane after they are released by the LolA protein. In Baumannia cicadellinicola subsp. Homalodisca coagulata, this protein is Outer-membrane lipoprotein LolB.